We begin with the raw amino-acid sequence, 156 residues long: MPRRREVPKREILPDPKFGSVDLSKFMNVIMESGKKAVAERIIYGALEQVEKKAGKDPMEIFLTALNNVKPMVEVKSRRVGGANYQVPVEVRPIRRMALAMRWLKESARKRSEKSMAQRLANELMEACEGRGGAMKKRDEVHRMAEANKAFSHFRF.

It belongs to the universal ribosomal protein uS7 family. As to quaternary structure, part of the 30S ribosomal subunit. Contacts proteins S9 and S11.

Its function is as follows. One of the primary rRNA binding proteins, it binds directly to 16S rRNA where it nucleates assembly of the head domain of the 30S subunit. Is located at the subunit interface close to the decoding center, probably blocks exit of the E-site tRNA. This Leptothrix cholodnii (strain ATCC 51168 / LMG 8142 / SP-6) (Leptothrix discophora (strain SP-6)) protein is Small ribosomal subunit protein uS7.